The primary structure comprises 86 residues: Small ribosomal subunit protein bS18 (86 aa).

This sequence belongs to the bacterial ribosomal protein bS18 family. In terms of assembly, part of the 30S ribosomal subunit. Forms a tight heterodimer with protein bS6.

Its function is as follows. Binds as a heterodimer with protein bS6 to the central domain of the 16S rRNA, where it helps stabilize the platform of the 30S subunit. The polypeptide is Small ribosomal subunit protein bS18 (Campylobacter lari (strain RM2100 / D67 / ATCC BAA-1060)).